Reading from the N-terminus, the 509-residue chain is Maturase K (509 aa).

It belongs to the intron maturase 2 family. MatK subfamily.

The protein localises to the plastid. It is found in the chloroplast. Its function is as follows. Usually encoded in the trnK tRNA gene intron. Probably assists in splicing its own and other chloroplast group II introns. The sequence is that of Maturase K from Banksia cuneata (Quairading banksia).